The sequence spans 459 residues: V-type ATP synthase beta chain (459 aa).

Belongs to the ATPase alpha/beta chains family.

Its function is as follows. Produces ATP from ADP in the presence of a proton gradient across the membrane. The V-type beta chain is a regulatory subunit. This chain is V-type ATP synthase beta chain, found in Clostridium botulinum (strain Alaska E43 / Type E3).